Reading from the N-terminus, the 163-residue chain is Nucleotide-binding protein MT0592 (163 aa).

This sequence belongs to the YajQ family.

In terms of biological role, nucleotide-binding protein. In Mycobacterium tuberculosis (strain CDC 1551 / Oshkosh), this protein is Nucleotide-binding protein MT0592.